A 173-amino-acid polypeptide reads, in one-letter code: NADH-ubiquinone oxidoreductase chain 6 (173 aa).

Helical transmembrane passes span 1-21 (MTYL…AVAS), 24-44 (APYF…GVLV), 53-73 (LVLF…SAAL), 87-107 (VLGY…LFWG), and 141-161 (GGML…VLEL).

It belongs to the complex I subunit 6 family.

It is found in the mitochondrion membrane. The enzyme catalyses a ubiquinone + NADH + 5 H(+)(in) = a ubiquinol + NAD(+) + 4 H(+)(out). Core subunit of the mitochondrial membrane respiratory chain NADH dehydrogenase (Complex I) that is believed to belong to the minimal assembly required for catalysis. Complex I functions in the transfer of electrons from NADH to the respiratory chain. The immediate electron acceptor for the enzyme is believed to be ubiquinone. The chain is NADH-ubiquinone oxidoreductase chain 6 (MT-ND6) from Oncorhynchus mykiss (Rainbow trout).